A 1234-amino-acid polypeptide reads, in one-letter code: Anion exchange protein 2 (1234 aa).

A disordered region spans residues 1–239 (MSSAPRRPAS…YNLQERRRIG (239 aa)). Over 1-704 (MSSAPRRPAS…SDFRDALDPQ (704 aa)) the chain is Cytoplasmic. Basic and acidic residues-rich tracts occupy residues 39-49 (LRTLGVERFEE) and 58-75 (GGEEPGRSYGEEDFEYHR). Basic residues-rich tracts occupy residues 76–85 (QSSHHIHHPL) and 94–110 (RRRKTPQGPGRKPRRRP). Serine 113 carries the phosphoserine modification. Positions 120–133 (TIEEGEEDEDEVGE) are enriched in acidic residues. Residues serine 145, serine 171, and serine 173 each carry the phosphoserine modification. Gly residues predominate over residues 207 to 216 (TAGGDDGGAA). The residue at position 240 (serine 240) is a Phosphoserine. Threonine 254 carries the phosphothreonine modification. Position 271 is an N6-methyllysine (lysine 271). Residues 287-315 (RKNAKGSTQAAREGREPGPTPRARPRAPH) form a disordered region. Phosphoserine is present on serine 440. A disordered region spans residues 446 to 467 (SLLGHHHAQGTESDPHVTEPLI). The next 4 helical transmembrane spans lie at 705-728 (CLAAVIFIYFAALSPAITFGGLLG), 734-771 (LIGVSELIMSTALQGVIFCLLGAQPLLVIGFSGPLLVF), 791-813 (VWIGFWLVLLALLMVALEGSFLV), and 823-843 (IFAFLISLIFIYETFYKLIKI). The segment at 705 to 1234 (CLAAVIFIYF…DEYNEMPMPV (530 aa)) is membrane (anion exchange). Over 844-893 (FQEHPLHGCSVSNDSEADSSSNNMTWAATTLAPDNSSASGQERPRGQPNT) the chain is Extracellular. Residues asparagine 856, asparagine 866, and asparagine 878 are each glycosylated (N-linked (GlcNAc...) asparagine). The chain crosses the membrane as a helical span at residues 894–911 (ALLSLVLMAGTFFIAFFL). Residues 912-926 (RKFKNSRFFPGRIRR) are Cytoplasmic-facing. Transmembrane regions (helical) follow at residues 927–947 (VIGDFGVPIAILIMVLVDYSI), 981–1003 (PFPVWMMVASLLPAVLVFILIFM), 1029–1050 (LLLIVAMGGICALFGLPWLAAA), 1084–1129 (VTGL…IQFY), and 1156–1192 (MHLFTALQLLCLALLWAVMSTAASLAFPFILILTVPL). The S-palmitoyl cysteine moiety is linked to residue cysteine 1166.

This sequence belongs to the anion exchanger (TC 2.A.31) family. As to expression, expressed in the parotid and submandibular glands (at protein level). Expressed in the gastric mucosa (at protein level). Expressed in the choroid plexus epithelium (at protein level). Expressed in the liver and gallbladder.

Its subcellular location is the apical cell membrane. It is found in the basolateral cell membrane. It catalyses the reaction hydrogencarbonate(in) + chloride(out) = hydrogencarbonate(out) + chloride(in). Its activity is regulated as follows. Inhibited by 4,4'-diisothiocyanatostilbene-2,2'-disulfonic acid (DIDS). In terms of biological role, sodium-independent anion exchanger which mediates the electroneutral exchange of chloride for bicarbonate ions across the cell membrane. Plays an important role in osteoclast differentiation and function. Regulates bone resorption and calpain-dependent actin cytoskeleton organization in osteoclasts via anion exchange-dependent control of pH. Essential for intracellular pH regulation in CD8(+) T-cells upon CD3 stimulation, modulating CD8(+) T-cell responses. In Rattus norvegicus (Rat), this protein is Anion exchange protein 2 (Slc4a2).